Reading from the N-terminus, the 735-residue chain is Transcription initiation factor IIF subunit alpha (735 aa).

6 disordered regions span residues 1–68 (MSRR…EYAE), 165–263 (EYKK…TANL), 297–323 (NEPE…AKRG), 446–465 (KAVA…NSEV), 471–606 (EEFA…HKEP), and 631–674 (PEGE…EETP). A compositionally biased stretch (low complexity) spans 33 to 54 (RMRMGQNGSNSSSPGVPNGDNS). Composition is skewed to basic and acidic residues over residues 59 to 68 (VKKDDPEYAE) and 165 to 174 (EYKKKAEQER). The span at 175–219 (STPNSGGMNKSGTVSLNNTVKDGSQTPTVDSVTKDNTANGVNSSI) shows a compositional bias: polar residues. The residue at position 198 (Ser-198) is a Phosphoserine. Phosphothreonine is present on Thr-200. The span at 220 to 238 (PTVTGSSVPPASPTTVSAV) shows a compositional bias: low complexity. The segment covering 239–263 (ESNGLSNGSTSAANGLDGNASTANL) has biased composition (polar residues). Composition is skewed to acidic residues over residues 453–465 (AMDE…NSEV) and 471–480 (EEFADDEEAP). Residues 487 to 500 (QENKESEQRIKKEM) show a composition bias toward basic and acidic residues. Acidic residues predominate over residues 513 to 522 (APSENEEDEL). Ser-515 carries the phosphoserine modification. Basic and acidic residues predominate over residues 523-536 (FGEKKIDEDGERIK). 3 positions are modified to phosphoserine: Ser-560, Ser-562, and Ser-571. Residues 564–583 (IENKENESPVKKEEDSDTLS) are compositionally biased toward basic and acidic residues. Residues 584–595 (KSKRSSPKKQQK) show a composition bias toward basic residues. Residues 636-654 (NPQTTKAVDSSNNASNTVP) show a composition bias toward polar residues. Position 655 is a phosphoserine (Ser-655).

The protein belongs to the TFIIF alpha subunit family. TFIIF is composed of three different subunits: TFG1/RAP74, TFG2/RAP30 and TAF14. In terms of processing, phosphorylated on Ser and other residues by TAF1 and casein kinase II-like kinases.

Its subcellular location is the nucleus. Its function is as follows. TFIIF is a general transcription initiation factor that binds to RNA polymerase II. Its functions include the recruitment of RNA polymerase II to the promoter bound DNA-TBP-TFIIB complex, decreasing the affinity of RNA polymerase II for non-specific DNA, allowing for the subsequent recruitment of TFIIE and TFIIH, and facilitating RNA polymerase II elongation. This is Transcription initiation factor IIF subunit alpha (TFG1) from Saccharomyces cerevisiae (strain ATCC 204508 / S288c) (Baker's yeast).